A 443-amino-acid polypeptide reads, in one-letter code: UDP-N-acetylmuramate--L-alanine ligase (443 aa).

Residue 110-116 (GAHGKTS) coordinates ATP.

It belongs to the MurCDEF family.

It is found in the cytoplasm. The catalysed reaction is UDP-N-acetyl-alpha-D-muramate + L-alanine + ATP = UDP-N-acetyl-alpha-D-muramoyl-L-alanine + ADP + phosphate + H(+). The protein operates within cell wall biogenesis; peptidoglycan biosynthesis. Its function is as follows. Cell wall formation. The polypeptide is UDP-N-acetylmuramate--L-alanine ligase (Streptococcus agalactiae serotype V (strain ATCC BAA-611 / 2603 V/R)).